The sequence spans 476 residues: Glycogen synthase (476 aa).

K15 serves as a coordination point for ADP-alpha-D-glucose.

This sequence belongs to the glycosyltransferase 1 family. Bacterial/plant glycogen synthase subfamily.

The enzyme catalyses [(1-&gt;4)-alpha-D-glucosyl](n) + ADP-alpha-D-glucose = [(1-&gt;4)-alpha-D-glucosyl](n+1) + ADP + H(+). The protein operates within glycan biosynthesis; glycogen biosynthesis. Functionally, synthesizes alpha-1,4-glucan chains using ADP-glucose. The sequence is that of Glycogen synthase from Streptococcus agalactiae serotype Ia (strain ATCC 27591 / A909 / CDC SS700).